We begin with the raw amino-acid sequence, 470 residues long: Uronate isomerase (470 aa).

It belongs to the metallo-dependent hydrolases superfamily. Uronate isomerase family.

It carries out the reaction D-glucuronate = D-fructuronate. The enzyme catalyses aldehydo-D-galacturonate = keto-D-tagaturonate. It functions in the pathway carbohydrate metabolism; pentose and glucuronate interconversion. In Shigella boydii serotype 18 (strain CDC 3083-94 / BS512), this protein is Uronate isomerase.